A 442-amino-acid polypeptide reads, in one-letter code: tRNA modification GTPase MnmE (442 aa).

(6S)-5-formyl-5,6,7,8-tetrahydrofolate is bound by residues Arg21, Glu79, and Lys118. One can recognise a TrmE-type G domain in the interval Gly214 to Asn367. Asn224 is a K(+) binding site. Residues Asn224 to Ser229, Ser243 to Thr249, and Asp268 to Gly271 contribute to the GTP site. Mg(2+) is bound at residue Ser228. K(+) contacts are provided by Ser243, Ile245, and Thr248. Thr249 is a binding site for Mg(2+). Position 442 (Lys442) interacts with (6S)-5-formyl-5,6,7,8-tetrahydrofolate.

Belongs to the TRAFAC class TrmE-Era-EngA-EngB-Septin-like GTPase superfamily. TrmE GTPase family. In terms of assembly, homodimer. Heterotetramer of two MnmE and two MnmG subunits. K(+) is required as a cofactor.

It localises to the cytoplasm. In terms of biological role, exhibits a very high intrinsic GTPase hydrolysis rate. Involved in the addition of a carboxymethylaminomethyl (cmnm) group at the wobble position (U34) of certain tRNAs, forming tRNA-cmnm(5)s(2)U34. This chain is tRNA modification GTPase MnmE, found in Campylobacter jejuni (strain RM1221).